The sequence spans 255 residues: Acetyl-coenzyme A carboxylase carboxyl transferase subunit alpha (255 aa).

The region spanning 1-235 (MNIAKIVREA…KKELQTELAR (235 aa)) is the CoA carboxyltransferase C-terminal domain.

It belongs to the AccA family. In terms of assembly, acetyl-CoA carboxylase is a heterohexamer composed of biotin carboxyl carrier protein (AccB), biotin carboxylase (AccC) and two subunits each of ACCase subunit alpha (AccA) and ACCase subunit beta (AccD).

It is found in the cytoplasm. It carries out the reaction N(6)-carboxybiotinyl-L-lysyl-[protein] + acetyl-CoA = N(6)-biotinyl-L-lysyl-[protein] + malonyl-CoA. The protein operates within lipid metabolism; malonyl-CoA biosynthesis; malonyl-CoA from acetyl-CoA: step 1/1. In terms of biological role, component of the acetyl coenzyme A carboxylase (ACC) complex. First, biotin carboxylase catalyzes the carboxylation of biotin on its carrier protein (BCCP) and then the CO(2) group is transferred by the carboxyltransferase to acetyl-CoA to form malonyl-CoA. In Streptococcus pneumoniae serotype 2 (strain D39 / NCTC 7466), this protein is Acetyl-coenzyme A carboxylase carboxyl transferase subunit alpha.